The chain runs to 884 residues: DNA mismatch repair protein MutS (884 aa).

601–608 (GPNMSGKS) serves as a coordination point for ATP. The disordered stretch occupies residues 826-845 (ESQLSFFGGEQSSKKQDKPL).

The protein belongs to the DNA mismatch repair MutS family.

In terms of biological role, this protein is involved in the repair of mismatches in DNA. It is possible that it carries out the mismatch recognition step. This protein has a weak ATPase activity. The chain is DNA mismatch repair protein MutS from Bacillus cereus (strain ATCC 14579 / DSM 31 / CCUG 7414 / JCM 2152 / NBRC 15305 / NCIMB 9373 / NCTC 2599 / NRRL B-3711).